The following is a 961-amino-acid chain: Thrombospondin-4 (961 aa).

The N-terminal stretch at 1–23 is a signal peptide; sequence MLAPRGATFLLLHLALQPWLGAG. Positions 24–192 constitute a Laminin G-like domain; that stretch reads AQATPQVFDL…LEELKLVVRG (169 aa). An EGF-like 1 domain is found at 286–325; that stretch reads PVRRCDSNPCFRGVRCTDTRDGFQCGPCPEGYTGNGIVCS. Cystine bridges form between Cys-290–Cys-301, Cys-295–Cys-310, Cys-313–Cys-324, Cys-330–Cys-341, Cys-335–Cys-350, Cys-353–Cys-377, Cys-383–Cys-394, Cys-388–Cys-403, Cys-406–Cys-418, Cys-424–Cys-438, Cys-432–Cys-448, Cys-450–Cys-461, Cys-477–Cys-482, Cys-487–Cys-507, Cys-523–Cys-543, Cys-546–Cys-566, Cys-582–Cys-602, Cys-605–Cys-625, Cys-643–Cys-663, Cys-683–Cys-703, and Cys-719–Cys-940. Residues 326–363 enclose the EGF-like 2; calcium-binding domain; sequence DVDECRYHPCYPGVRCVNLAPGFRCDACPVGFTGPMMQ. An EGF-like 3; calcium-binding domain is found at 379–419; the sequence is DIDECRNGACVLNSICINTLGSYRCGPCKPGYIGDQMRGCK. Residues 420–462 enclose the EGF-like 4 domain; sequence MERNCRDPELNPCSVNAQCIEERQGDVTCVCGVGWAGDGYICG. TSP type-3 repeat units lie at residues 463-495, 496-531, 532-554, 555-590, 591-613, 614-651, 652-691, and 692-727; these read KDVD…NSGQ, EDAD…NVDQ, RNSD…NNDQ, KDTD…NSDQ, EDRD…NPNQ, SDVD…NSAQ, LDTD…NPAQ, and EDSN…EVTL. A Cell attachment site motif is present at residues 562–564; sequence KGD. Positions 581–671 are disordered; sequence NCQKVPNSDQ…ECDDDDDNDG (91 aa). A glycan (N-linked (GlcNAc...) asparagine) is linked at Asn-612. A compositionally biased stretch (polar residues) spans 640 to 652; it reads TDNCPTVINSAQL. Residues 660-671 show a composition bias toward acidic residues; that stretch reads GDECDDDDDNDG. The TSP C-terminal domain occupies 731–945; the sequence is RAYQTVVLDP…LKYRCNDTIP (215 aa). The N-linked (GlcNAc...) asparagine glycan is linked to Asn-941.

This sequence belongs to the thrombospondin family. In terms of assembly, homopentamer; disulfide-linked. Interacts with PTBP3. Interacts (via EGF-like 3; calcium-binding domain) with ATF6 and facilitates its processing, activation and nuclear translocation. Interacts with NOTCH1.

The protein localises to the endoplasmic reticulum. It is found in the sarcoplasmic reticulum. It localises to the secreted. The protein resides in the extracellular space. Its subcellular location is the extracellular matrix. Its function is as follows. Adhesive glycoprotein that mediates cell-to-cell and cell-to-matrix interactions and is involved in various processes including cellular proliferation, migration, adhesion and attachment, inflammatory response to CNS injury, regulation of vascular inflammation and adaptive responses of the heart to pressure overload and in myocardial function and remodeling. Binds to structural extracellular matrix (ECM) proteins and modulates the ECM in response to tissue damage, contributing to cardioprotective and adaptive ECM remodeling. Plays a role in ER stress response, via its interaction with the activating transcription factor 6 alpha (ATF6) which produces adaptive ER stress response factors and protects myocardium from pressure overload. May contribute to spinal presynaptic hypersensitivity and neuropathic pain states after peripheral nerve injury. May play a role in regulating protective astrogenesis from the subventricular zone (SVZ) niche after injury in a NOTCH1-dependent manner. In Bos taurus (Bovine), this protein is Thrombospondin-4 (THBS4).